Reading from the N-terminus, the 380-residue chain is Kappa-type opioid receptor (380 aa).

Residues 1-57 are Extracellular-facing; sequence MDSPIQIFRGEPGPTCAPSACLPPNSSAWFPGWAEPDSNGSAGSEDAQLEPAHISPA. Asn-25 and Asn-39 each carry an N-linked (GlcNAc...) asparagine glycan. A helical membrane pass occupies residues 58–85; the sequence is IPVIITAVYSVVFVVGLVGNSLVMFVII. Over 86–95 the chain is Cytoplasmic; it reads RYTKMKTATN. A helical membrane pass occupies residues 96–119; sequence IYIFNLALADALVTTTMPFQSTVY. At 120 to 132 the chain is on the extracellular side; the sequence is LMNSWPFGDVLCK. Cys-131 and Cys-210 are joined by a disulfide. Residues 133–154 traverse the membrane as a helical segment; sequence IVISIDYYNMFTSIFTLTMMSV. At 155–173 the chain is on the cytoplasmic side; that stretch reads DRYIAVCHPVKALDFRTPL. Residues 174-196 form a helical membrane-spanning segment; it reads KAKIINICIWLLSSSVGISAIVL. Residues 197–222 are Extracellular-facing; sequence GGTKVREDVDVIECSLQFPDDDYSWW. The helical transmembrane segment at 223–247 threads the bilayer; it reads DLFMKICVFIFAFVIPVLIIIVCYT. Residues 248-274 are Cytoplasmic-facing; sequence LMILRLKSVRLLSGSREKDRNLRRITR. The chain crosses the membrane as a helical span at residues 275–296; the sequence is LVLVVVAVFVVCWTPIHIFILV. Residues 297 to 311 lie on the Extracellular side of the membrane; it reads EALGSTSHSTAALSS. The helical transmembrane segment at 312 to 333 threads the bilayer; it reads YYFCIALGYTNSSLNPILYAFL. The Cytoplasmic portion of the chain corresponds to 334 to 380; the sequence is DENFKRCFRDFCFPLKMRMERQSTSRVRNTVQDPAYLRDIDGMNKPV. Residue Cys-345 is the site of S-palmitoyl cysteine attachment.

Belongs to the G-protein coupled receptor 1 family. As to quaternary structure, interacts with NHERF1. Interacts with GABARAPL1. As to expression, detected in brain and placenta.

The protein localises to the cell membrane. Its function is as follows. G-protein coupled opioid receptor that functions as a receptor for endogenous alpha-neoendorphins and dynorphins, but has low affinity for beta-endorphins. Also functions as a receptor for various synthetic opioids and for the psychoactive diterpene salvinorin A. Ligand binding causes a conformation change that triggers signaling via guanine nucleotide-binding proteins (G proteins) and modulates the activity of down-stream effectors, such as adenylate cyclase. Signaling leads to the inhibition of adenylate cyclase activity. Inhibits neurotransmitter release by reducing calcium ion currents and increasing potassium ion conductance. Plays a role in the perception of pain. Plays a role in mediating reduced physical activity upon treatment with synthetic opioids. Plays a role in the regulation of salivation in response to synthetic opioids. May play a role in arousal and regulation of autonomic and neuroendocrine functions. In Homo sapiens (Human), this protein is Kappa-type opioid receptor (OPRK1).